The primary structure comprises 129 residues: Small ribosomal subunit protein uS11 (129 aa).

Belongs to the universal ribosomal protein uS11 family. Part of the 30S ribosomal subunit. Interacts with proteins S7 and S18. Binds to IF-3.

Located on the platform of the 30S subunit, it bridges several disparate RNA helices of the 16S rRNA. Forms part of the Shine-Dalgarno cleft in the 70S ribosome. The protein is Small ribosomal subunit protein uS11 of Synechococcus sp. (strain RCC307).